Consider the following 294-residue polypeptide: uncharacterized protein (294 aa).

A signal peptide spans 1–16 (MQNFMVLLLLIVAVVA). Residues Asn-25 and Asn-162 are each glycosylated (N-linked (GlcNAc...) asparagine; by host).

This is an uncharacterized protein from Acheta domesticus (House cricket).